The following is a 63-amino-acid chain: uncharacterized protein (63 aa).

This is an uncharacterized protein from Escherichia coli (strain K12).